The primary structure comprises 298 residues: Protease HtpX (298 aa).

The next 2 helical transmembrane spans lie at 4–24 (IGLF…TMNL) and 38–58 (LGNL…VSLA). Zn(2+) is bound at residue histidine 145. Glutamate 146 is an active-site residue. Histidine 149 provides a ligand contact to Zn(2+). 2 consecutive transmembrane segments (helical) span residues 160 to 180 (LLQG…AYVV) and 194 to 214 (ITFI…ASMI). Zn(2+) is bound at residue glutamate 223.

It belongs to the peptidase M48B family. Zn(2+) serves as cofactor.

The protein localises to the cell inner membrane. The polypeptide is Protease HtpX (Hydrogenovibrio crunogenus (strain DSM 25203 / XCL-2) (Thiomicrospira crunogena)).